We begin with the raw amino-acid sequence, 456 residues long: tRNA modification GTPase MnmE (456 aa).

Residues R23, E80, and K122 each contribute to the (6S)-5-formyl-5,6,7,8-tetrahydrofolate site. A TrmE-type G domain is found at 218–380; the sequence is AKRIVIVGPP…LKKHLSNRQK (163 aa). N228 contacts K(+). GTP-binding positions include 228–233, 247–253, and 272–275; these read NAGKSS, TDLPGTT, and DTAG. S232 provides a ligand contact to Mg(2+). Residues T247, L249, and T252 each coordinate K(+). Mg(2+) is bound at residue T253. K456 provides a ligand contact to (6S)-5-formyl-5,6,7,8-tetrahydrofolate.

Belongs to the TRAFAC class TrmE-Era-EngA-EngB-Septin-like GTPase superfamily. TrmE GTPase family. As to quaternary structure, homodimer. Heterotetramer of two MnmE and two MnmG subunits. K(+) serves as cofactor.

It is found in the cytoplasm. Functionally, exhibits a very high intrinsic GTPase hydrolysis rate. Involved in the addition of a carboxymethylaminomethyl (cmnm) group at the wobble position (U34) of certain tRNAs, forming tRNA-cmnm(5)s(2)U34. This chain is tRNA modification GTPase MnmE, found in Buchnera aphidicola subsp. Schizaphis graminum (strain Sg).